The chain runs to 328 residues: Endochitinase (328 aa).

A signal peptide spans 1–26 (MRRHKEVNFVAYLLFSLLVLVSAALA). The region spanning 27–68 (QNCGSQGGGKACASGQCCSKFGWCGNTNDYCGSGNCQSQCPG) is the Chitin-binding type-1 domain. 7 disulfides stabilise this stretch: Cys29-Cys44, Cys38-Cys50, Cys43-Cys57, Cys62-Cys66, Cys100-Cys162, Cys174-Cys182, and Cys281-Cys313. Glu144 functions as the Proton donor in the catalytic mechanism. Positions 322 to 328 (ALLVDTL) are cleaved as a propeptide — removed in mature form.

It belongs to the glycosyl hydrolase 19 family. Chitinase class I subfamily.

It localises to the vacuole. The catalysed reaction is Random endo-hydrolysis of N-acetyl-beta-D-glucosaminide (1-&gt;4)-beta-linkages in chitin and chitodextrins.. In terms of biological role, defense against chitin-containing fungal pathogens. In Solanum tuberosum (Potato), this protein is Endochitinase.